The chain runs to 516 residues: Nuclear speckle splicing regulatory protein 1 (516 aa).

Disordered regions lie at residues 1 to 43, 111 to 137, 151 to 170, and 188 to 494; these read MATS…GESL, ERKK…KFAD, KERQ…EAAL, and QTVG…SSAR. S33 carries the post-translational modification Phosphoserine. A coiled-coil region spans residues 100 to 176; that stretch reads KYINQLLRAV…EAALDVKKQK (77 aa). Residues 207–221 show a composition bias toward low complexity; that stretch reads TSSAAAERSPSPEST. Composition is skewed to basic and acidic residues over residues 222 to 239 and 271 to 466; these read ANRR…DQVD and ERER…KLVE. Residues 358-401 are a coiled coil; sequence KGERDRRDNSPKDRERDRKGERDRRDNSPKDRERETRDKSPKDR.

It belongs to the NSRP1 family.

This is Nuclear speckle splicing regulatory protein 1 (nsrp1) from Danio rerio (Zebrafish).